A 269-amino-acid polypeptide reads, in one-letter code: Phosphatidylglycerol--prolipoprotein diacylglyceryl transferase (269 aa).

Helical transmembrane passes span 17–37 (LKIHWYGLMYLIGIGGAWLLA), 56–76 (LVFWLSMGVIVGGRLGYVLFY), 92–112 (WKGGMSFHGGFIGVMLAALWF), 120–140 (FFELMDFVAPLVPIGLGAGRI), 174–194 (PSQLYQFALEGVALFVILWLY), 202–222 (MAVSGMFALFYGIFRFIVEFV), and 237–257 (LTMGQLLCVPMIVGGIFLIWL). Arg139 is a binding site for a 1,2-diacyl-sn-glycero-3-phospho-(1'-sn-glycerol).

Belongs to the Lgt family.

It localises to the cell inner membrane. The enzyme catalyses L-cysteinyl-[prolipoprotein] + a 1,2-diacyl-sn-glycero-3-phospho-(1'-sn-glycerol) = an S-1,2-diacyl-sn-glyceryl-L-cysteinyl-[prolipoprotein] + sn-glycerol 1-phosphate + H(+). The protein operates within protein modification; lipoprotein biosynthesis (diacylglyceryl transfer). Catalyzes the transfer of the diacylglyceryl group from phosphatidylglycerol to the sulfhydryl group of the N-terminal cysteine of a prolipoprotein, the first step in the formation of mature lipoproteins. The polypeptide is Phosphatidylglycerol--prolipoprotein diacylglyceryl transferase (Pseudomonas entomophila (strain L48)).